The primary structure comprises 571 residues: Serine/threonine-protein kinase Nek7 (571 aa).

The Protein kinase domain occupies 19–277 (YHVVEQVRRG…LRNPSLQPYL (259 aa)). Residues 25–33 (VRRGKSSSD) and K48 contribute to the ATP site. D144 functions as the Proton acceptor in the catalytic mechanism. 2 disordered regions span residues 298 to 321 (SPKDKARRNSLPGKFGKERVSREK) and 338 to 363 (TETGSSSSSQPASSTNGAEDKLETKR). The segment covering 312-321 (FGKERVSREK) has biased composition (basic and acidic residues). The span at 342–351 (SSSSSQPASS) shows a compositional bias: low complexity.

Belongs to the protein kinase superfamily. NEK Ser/Thr protein kinase family. NIMA subfamily.

It carries out the reaction L-seryl-[protein] + ATP = O-phospho-L-seryl-[protein] + ADP + H(+). It catalyses the reaction L-threonyl-[protein] + ATP = O-phospho-L-threonyl-[protein] + ADP + H(+). May be involved in plant development processes. The sequence is that of Serine/threonine-protein kinase Nek7 (NEK7) from Arabidopsis thaliana (Mouse-ear cress).